We begin with the raw amino-acid sequence, 383 residues long: ATP phosphoribosyltransferase regulatory subunit (383 aa).

Belongs to the class-II aminoacyl-tRNA synthetase family. HisZ subfamily. Heteromultimer composed of HisG and HisZ subunits.

It localises to the cytoplasm. Its pathway is amino-acid biosynthesis; L-histidine biosynthesis; L-histidine from 5-phospho-alpha-D-ribose 1-diphosphate: step 1/9. Its function is as follows. Required for the first step of histidine biosynthesis. May allow the feedback regulation of ATP phosphoribosyltransferase activity by histidine. This chain is ATP phosphoribosyltransferase regulatory subunit, found in Desulfitobacterium hafniense (strain DSM 10664 / DCB-2).